A 268-amino-acid chain; its full sequence is Microtubule-associated protein RP/EB family member 1 (268 aa).

Ala2 carries the post-translational modification N-acetylalanine. A Calponin-homology (CH) domain is found at 14–116 (NLSRHDMLAW…FVQWFKKFFD (103 aa)). Residue Lys66 is modified to N6-crotonyllysine. Tyr124 carries the phosphotyrosine modification. The interval 124–268 (YDPVAARQGQ…GGPQEEQEEY (145 aa)) is interaction with MTUS2/TIP150. Positions 146–187 (LNKPKKPLTSSSAAPQRPISTQRTAAAPKAGPGVVRKNPGVG) are disordered. The segment covering 153-169 (LTSSSAAPQRPISTQRT) has biased composition (polar residues). Phosphoserine is present on residues Ser155 and Ser165. An EB1 C-terminal domain is found at 185 to 255 (GVGNGDDEAA…LYATDEGFVI (71 aa)). Residues 185–268 (GVGNGDDEAA…GGPQEEQEEY (84 aa)) form an interaction with CDK5RAP2 region. Residues 206–211 (TVEDLE) are interaction with APC. The segment at 208–268 (EDLEKERDFY…GGPQEEQEEY (61 aa)) is DCTN1-binding. An N6-acetyllysine modification is found at Lys220. Positions 220 to 242 (KLRNIELICQENEGENDPVLQRI) are APC-binding. The interval 232–255 (EGENDPVLQRIVDILYATDEGFVI) is interaction with SKA1.

This sequence belongs to the MAPRE family. Homodimer. Heterodimer with MAPRE3. Interacts with DCTN1, DCTN2, TERF1 and dynein intermediate chain. Interaction with DIAPH1 and DIAPH2. Interacts (via C-terminal residues 206-211) with APC (via C-terminal residues 2674-2843); the interaction inhibits association with and bundling of F-actin. Interacts with CLASP2, DST, KIF2C and STIM1; probably required for their targeting to the growing microtubule plus ends. Interacts with MTUS2; interaction is direct and probably targets MTUS2 to microtubules. Interacts (via C-terminus) with SKA1 (via SXIP motif); the interaction is direct and stabilizes the kinetochore-microtubule attachment of the SKA1 complex. Interacts with APC2. Interacts with CLASP1. Interacts with CDK5RAP2. Interacts with MACF1. Interacts with RABL2/RABL2A; binds preferentially to GTP-bound RABL2. Interacts with KCNAB2. Interacts (via C-terminus) with CLIP1. Interacts with SLAIN2 and SLAIN1. Interacts with KIF18B; this interaction is required for efficient accumulation of KIF18B at microtubule plus ends. Interacts with MISP. Interacts with KNSTRN. Interacts with NCKAP5L. Interacts with CAMSAP2. Interacts with PDE4DIP isoform 13/MMG8/SMYLE; this interaction is required for its recruitment to the Golgi apparatus. Forms a pericentrosomal complex with AKAP9, CDK5RAP2 and PDE4DIP isoform 13/MMG8/SMYLE; within this complex, MAPRE1 binding to CDK5RAP2 may be mediated by PDE4DIP. Interacts with AKNA. Interacts with GAS2L1, GAS2L2, and GAS2L3. Interacts with RARRES1 and AGBL2. Post-translationally, acetylation at Lys-220 by KAT2B/PCAF promotes dynamic kinetochore-microtubule interactions in early mitosis. In terms of processing, crotonylated by KAT5 during mitosis, promoting astral microtubule plasticity and dynamic connection between astral microtubules and the cortex during mitotic chromosome segregation, thereby ensuring accurate spindle positioning in mitosis. Decrotonylated by HDAC3. As to expression, ubiquitously expressed.

Its subcellular location is the cytoplasm. The protein resides in the cytoskeleton. The protein localises to the microtubule organizing center. It is found in the centrosome. It localises to the golgi apparatus. Its subcellular location is the spindle. The protein resides in the spindle pole. In terms of biological role, plus-end tracking protein (+TIP) that binds to the plus-end of microtubules and regulates the dynamics of the microtubule cytoskeleton. Recruits other +TIP proteins to microtubules by binding to a conserved Ser-X-Leu-Pro (SXLP) motif in their polypeptide chains. Promotes cytoplasmic microtubule nucleation and elongation. Involved in mitotic spindle positioning by stabilizing microtubules and promoting dynamic connection between astral microtubules and the cortex during mitotic chromosome segregation. Assists chromosome alignment in metaphase by recruiting the SKA complex to the spindle and stabilizing its interactions with microtubule bundles (K-fibers). Also acts as a regulator of minus-end microtubule organization: interacts with the complex formed by AKAP9 and PDE4DIP, leading to recruit CAMSAP2 to the Golgi apparatus, thereby tethering non-centrosomal minus-end microtubules to the Golgi, an important step for polarized cell movement. Promotes elongation of CAMSAP2-decorated microtubule stretches on the minus-end of microtubules. Acts as a regulator of autophagosome transport via interaction with CAMSAP2. Functions downstream of Rho GTPases and DIAPH1 in stable microtubule formation. May play a role in cell migration. The polypeptide is Microtubule-associated protein RP/EB family member 1 (Homo sapiens (Human)).